The sequence spans 251 residues: Small ribosomal subunit protein uS2 (251 aa).

It belongs to the universal ribosomal protein uS2 family.

This chain is Small ribosomal subunit protein uS2, found in Chlorobium chlorochromatii (strain CaD3).